Here is an 81-residue protein sequence, read N- to C-terminus: Photosystem I iron-sulfur center (81 aa).

2 4Fe-4S ferredoxin-type domains span residues 2-31 (SHSV…MVPW) and 37-68 (GQIA…IRVY). [4Fe-4S] cluster-binding residues include cysteine 11, cysteine 14, cysteine 17, cysteine 21, cysteine 48, cysteine 51, cysteine 54, and cysteine 58.

In terms of assembly, the cyanobacterial PSI reaction center is composed of one copy each of PsaA,B,C,D,E,F,I,J,K,L,M and X, and forms trimeric complexes. [4Fe-4S] cluster serves as cofactor.

Its subcellular location is the cellular thylakoid membrane. The catalysed reaction is reduced [plastocyanin] + hnu + oxidized [2Fe-2S]-[ferredoxin] = oxidized [plastocyanin] + reduced [2Fe-2S]-[ferredoxin]. Apoprotein for the two 4Fe-4S centers FA and FB of photosystem I (PSI); essential for photochemical activity. FB is the terminal electron acceptor of PSI, donating electrons to ferredoxin. The C-terminus interacts with PsaA/B/D and helps assemble the protein into the PSI complex. Required for binding of PsaD and PsaE to PSI. PSI is a plastocyanin/cytochrome c6-ferredoxin oxidoreductase, converting photonic excitation into a charge separation, which transfers an electron from the donor P700 chlorophyll pair to the spectroscopically characterized acceptors A0, A1, FX, FA and FB in turn. This chain is Photosystem I iron-sulfur center, found in Synechococcus sp. (strain RCC307).